Here is a 145-residue protein sequence, read N- to C-terminus: Major pollen allergen Lig v 1 (145 aa).

3 disulfides stabilise this stretch: Cys19–Cys90, Cys22–Cys131, and Cys43–Cys78. Residue Asn111 is glycosylated (N-linked (GlcNAc...) asparagine).

The protein belongs to the Ole e I family.

The protein resides in the secreted. This chain is Major pollen allergen Lig v 1, found in Ligustrum vulgare (Common privet).